Reading from the N-terminus, the 242-residue chain is Biosynthetic peptidoglycan transglycosylase (242 aa).

A helical transmembrane segment spans residues 19 to 39 (LMVVLAVFWGGGIALFSVAPV).

It belongs to the glycosyltransferase 51 family.

Its subcellular location is the cell inner membrane. It carries out the reaction [GlcNAc-(1-&gt;4)-Mur2Ac(oyl-L-Ala-gamma-D-Glu-L-Lys-D-Ala-D-Ala)](n)-di-trans,octa-cis-undecaprenyl diphosphate + beta-D-GlcNAc-(1-&gt;4)-Mur2Ac(oyl-L-Ala-gamma-D-Glu-L-Lys-D-Ala-D-Ala)-di-trans,octa-cis-undecaprenyl diphosphate = [GlcNAc-(1-&gt;4)-Mur2Ac(oyl-L-Ala-gamma-D-Glu-L-Lys-D-Ala-D-Ala)](n+1)-di-trans,octa-cis-undecaprenyl diphosphate + di-trans,octa-cis-undecaprenyl diphosphate + H(+). It functions in the pathway cell wall biogenesis; peptidoglycan biosynthesis. In terms of biological role, peptidoglycan polymerase that catalyzes glycan chain elongation from lipid-linked precursors. In Shigella dysenteriae serotype 1 (strain Sd197), this protein is Biosynthetic peptidoglycan transglycosylase.